We begin with the raw amino-acid sequence, 332 residues long: L-lactate dehydrogenase A chain (332 aa).

Residues 29-57 (GAVG…VEDK) and arginine 99 each bind NAD(+). Substrate contacts are provided by arginine 106, asparagine 138, and arginine 169. Asparagine 138 lines the NAD(+) pocket. Histidine 193 functions as the Proton acceptor in the catalytic mechanism. Threonine 248 serves as a coordination point for substrate.

It belongs to the LDH/MDH superfamily. LDH family. In terms of assembly, homotetramer.

Its subcellular location is the cytoplasm. The catalysed reaction is (S)-lactate + NAD(+) = pyruvate + NADH + H(+). Its pathway is fermentation; pyruvate fermentation to lactate; (S)-lactate from pyruvate: step 1/1. Functionally, interconverts simultaneously and stereospecifically pyruvate and lactate with concomitant interconversion of NADH and NAD(+). In Gallus gallus (Chicken), this protein is L-lactate dehydrogenase A chain (LDHA).